A 441-amino-acid chain; its full sequence is Trigger factor (441 aa).

Positions 163 to 248 (GDQVVFDFVG…IKEVKKPVPA (86 aa)) constitute a PPIase FKBP-type domain.

It belongs to the FKBP-type PPIase family. Tig subfamily.

It is found in the cytoplasm. The enzyme catalyses [protein]-peptidylproline (omega=180) = [protein]-peptidylproline (omega=0). Its function is as follows. Involved in protein export. Acts as a chaperone by maintaining the newly synthesized protein in an open conformation. Functions as a peptidyl-prolyl cis-trans isomerase. The protein is Trigger factor of Jannaschia sp. (strain CCS1).